The sequence spans 273 residues: Eukaryotic translation initiation factor 3 subunit G-2 (273 aa).

An RRM domain is found at 193–271 (SAVRISNLSE…LILCVEWSKP (79 aa)).

Belongs to the eIF-3 subunit G family. Component of the eukaryotic translation initiation factor 3 (eIF-3) complex. The eIF-3 complex interacts with pix.

The protein resides in the cytoplasm. Its function is as follows. RNA-binding component of the eukaryotic translation initiation factor 3 (eIF-3) complex, which is involved in protein synthesis of a specialized repertoire of mRNAs and, together with other initiation factors, stimulates binding of mRNA and methionyl-tRNAi to the 40S ribosome. The eIF-3 complex specifically targets and initiates translation of a subset of mRNAs involved in cell proliferation. This subunit can bind 18S rRNA. This is Eukaryotic translation initiation factor 3 subunit G-2 from Drosophila simulans (Fruit fly).